We begin with the raw amino-acid sequence, 407 residues long: MSKQKPSLWRALRALSFIISIPLLIQYLVLKWYSTSQNTPTPVFHEPNHETNLTVWEVLSNDDRVSKFVDVIGKLPDIVRGLSAPQARFTVYAPVNEAFDSFYFPPDPPPFFGLFIAGCHMGPGPVPAERLPSMGTVSSFVNGDIFFTYKQRISVQKDKSGLTLNRAARVLPVNASQSIAVNGFVHHIDTVLELPNSTAHALRTRPELSKLRRGLEATKLSESIYDTNAHVSQTIFAPTNAAFDRLGKTATKFLFSHGGRPYLRALLKYHVVANKTLFSDSYWPHGGAKLMDLSLIPNKDSHQFDLPTLHNNLTLQVESRKIHKKWHLNVLKDQVAEGKSHDSIPVSMPDVILMDGVMHFIDSILLPPAKSEQRKTSWLSRLKSSLGHNKQSIEDLVTLLGPYIDEP.

The N-terminal stretch at 1 to 35 is a signal peptide; it reads MSKQKPSLWRALRALSFIISIPLLIQYLVLKWYST. N-linked (GlcNAc...) asparagine glycosylation is found at Asn-52, Asn-174, Asn-196, Asn-274, and Asn-312. FAS1 domains lie at 52-192 and 195-365; these read NLTV…DTVL and PNST…DSIL.

Might be part of an extracellular enzyme complex composed of GIP1, aurF, aurO and aurS.

Its subcellular location is the secreted. It localises to the extracellular space. Its pathway is pigment biosynthesis. In terms of biological role, part of the gene cluster that mediates the biosynthesis of aurofusarin, a red mycelium pigment which is acting as a mycotoxin. The first step is performed by the polyketide synthase which condenses one acetyl-CoA and 6 malonyl-CoA units to form the first intermediate, the cyclic heptaketide and yellow pigment YWA1. The C2 hydroxyl group in the pyrone ring of YWA1 is probably formed during ring closure by an aldol-type cyclization reaction. The dehydratase aurZ then acts as the first tailoring enzyme in the aurofusarin biosynthetic pathway by converting YWA1 to nor-rubrofusarin. Nor-rubrofusarin is then methylated to rubrofusarin by the O-methyltransferase aurJ. Rubrofusarin is then transported across the plasma membrane by the rubrofusarin-specific pump aurT for further enzymatic processing by the extracellular complex composed of GIP1, aurF, aurO and aurS to yield aurofusarin. In Gibberella zeae (strain ATCC MYA-4620 / CBS 123657 / FGSC 9075 / NRRL 31084 / PH-1) (Wheat head blight fungus), this protein is Aurofusarin biosynthesis cluster protein S.